A 413-amino-acid polypeptide reads, in one-letter code: Divalent metal cation transporter MntH (413 aa).

Transmembrane regions (helical) follow at residues 19–39, 46–66, 94–114, 122–142, 156–176, 196–216, 241–261, 290–310, 329–349, 350–370, and 389–409; these read LALM…GNFA, ASFG…AMLI, VWFY…AEFI, LVLG…TFLI, VIGG…IFSQ, AVFL…IYLH, IAMT…AAAF, IFGL…TLAG, AITM…TRIL, VMSQ…LLIF, and IGWA…VGSL.

Belongs to the NRAMP family.

The protein resides in the cell inner membrane. Functionally, h(+)-stimulated, divalent metal cation uptake system. This chain is Divalent metal cation transporter MntH, found in Klebsiella pneumoniae subsp. pneumoniae (strain ATCC 700721 / MGH 78578).